The primary structure comprises 173 residues: ATP synthase subunit beta, mitochondrial (173 aa).

This sequence belongs to the ATPase alpha/beta chains family. F-type ATPases have 2 components, CF(1) - the catalytic core - and CF(0) - the membrane proton channel. CF(1) has five subunits: alpha(3), beta(3), gamma(1), delta(1), epsilon(1). CF(0) has three main subunits: a, b and c.

The protein resides in the mitochondrion. Its subcellular location is the mitochondrion inner membrane. The enzyme catalyses ATP + H2O + 4 H(+)(in) = ADP + phosphate + 5 H(+)(out). Its function is as follows. Mitochondrial membrane ATP synthase (F(1)F(0) ATP synthase or Complex V) produces ATP from ADP in the presence of a proton gradient across the membrane which is generated by electron transport complexes of the respiratory chain. F-type ATPases consist of two structural domains, F(1) - containing the extramembraneous catalytic core and F(0) - containing the membrane proton channel, linked together by a central stalk and a peripheral stalk. During catalysis, ATP synthesis in the catalytic domain of F(1) is coupled via a rotary mechanism of the central stalk subunits to proton translocation. Subunits alpha and beta form the catalytic core in F(1). Rotation of the central stalk against the surrounding alpha(3)beta(3) subunits leads to hydrolysis of ATP in three separate catalytic sites on the beta subunits. The chain is ATP synthase subunit beta, mitochondrial (ATPB) from Actinidia deliciosa (Kiwi).